The following is a 679-amino-acid chain: Methionine--tRNA ligase (679 aa).

The short motif at 14–24 (PYANGSIHLGH) is the 'HIGH' region element. C145, C148, C158, and C161 together coordinate Zn(2+). The 'KMSKS' region signature appears at 331 to 335 (KMSKS). An ATP-binding site is contributed by K334. In terms of domain architecture, tRNA-binding spans 577 to 679 (AFAAVDLRIA…SGAKPGQRVK (103 aa)).

Belongs to the class-I aminoacyl-tRNA synthetase family. MetG type 1 subfamily. In terms of assembly, homodimer. Zn(2+) is required as a cofactor.

It localises to the cytoplasm. The enzyme catalyses tRNA(Met) + L-methionine + ATP = L-methionyl-tRNA(Met) + AMP + diphosphate. In terms of biological role, is required not only for elongation of protein synthesis but also for the initiation of all mRNA translation through initiator tRNA(fMet) aminoacylation. The protein is Methionine--tRNA ligase of Pseudomonas paraeruginosa (strain DSM 24068 / PA7) (Pseudomonas aeruginosa (strain PA7)).